The chain runs to 619 residues: Dynein axonemal intermediate chain 2 (619 aa).

WD repeat units lie at residues 214-254, 261-302, 362-401, 405-445, and 450-489; these read KPSS…LVAE, SHRD…EPTE, GHHG…SSIM, YHMA…CDPA, and VCDD…STLQ. A disordered region spans residues 566–619; sequence EALKKKPKPKKASIEVEGEDELEDIAGEEEESGIIMGEDTGEDDMDEKNEGGAP. The segment covering 581-597 has biased composition (acidic residues); the sequence is VEGEDELEDIAGEEEES.

This sequence belongs to the dynein intermediate chain family. As to quaternary structure, consists of at least two heavy chains and a number of intermediate and light chains. Interacts with DNAAF2. Interacts with DNAAF6/PIH1D3. Interacts with HEATR2; probably involved in outer arm dynein assembly. Interacts with CFAP53.

The protein resides in the cytoplasm. Its subcellular location is the cytoskeleton. It localises to the cilium axoneme. It is found in the dynein axonemal particle. Part of the dynein complex of respiratory cilia. In Rattus norvegicus (Rat), this protein is Dynein axonemal intermediate chain 2 (Dnai2).